The following is a 233-amino-acid chain: MKSLCYLNQEDCFPAAHKALTDPNGLIAIGGDLQPERLLSAYQQGIFPWFNQGEPILWWTPDPRAVFQLSDYRPSRSLMKTLKRQTWRFTINKAFDAVIHQCAALRQEGTWITPAIKAAYGQLHAQGDAHSIEVWQGEQLVGGLYGIAVGKIFCGESMFHLETDASKAAFHLLVTHLRRFEFTLIDAQVMNPHLARLGAKPLPREAFLTQLAQLKHQHSPATAWQPQEVKLGY.

Belongs to the L/F-transferase family.

Its subcellular location is the cytoplasm. It carries out the reaction N-terminal L-lysyl-[protein] + L-leucyl-tRNA(Leu) = N-terminal L-leucyl-L-lysyl-[protein] + tRNA(Leu) + H(+). The catalysed reaction is N-terminal L-arginyl-[protein] + L-leucyl-tRNA(Leu) = N-terminal L-leucyl-L-arginyl-[protein] + tRNA(Leu) + H(+). It catalyses the reaction L-phenylalanyl-tRNA(Phe) + an N-terminal L-alpha-aminoacyl-[protein] = an N-terminal L-phenylalanyl-L-alpha-aminoacyl-[protein] + tRNA(Phe). Its function is as follows. Functions in the N-end rule pathway of protein degradation where it conjugates Leu, Phe and, less efficiently, Met from aminoacyl-tRNAs to the N-termini of proteins containing an N-terminal arginine or lysine. This Shewanella denitrificans (strain OS217 / ATCC BAA-1090 / DSM 15013) protein is Leucyl/phenylalanyl-tRNA--protein transferase.